The following is a 374-amino-acid chain: tRNA-specific 2-thiouridylase MnmA (374 aa).

Residues 17 to 24 (GMSGGVDS) and M43 each bind ATP. Residues 103–105 (NPD) are interaction with target base in tRNA. Residue C108 is the Nucleophile of the active site. A disulfide bridge connects residues C108 and C204. ATP is bound at residue G132. The segment at 154–156 (KDQ) is interaction with tRNA. C204 acts as the Cysteine persulfide intermediate in catalysis. The tract at residues 316-317 (RY) is interaction with tRNA.

The protein belongs to the MnmA/TRMU family.

The protein localises to the cytoplasm. It carries out the reaction S-sulfanyl-L-cysteinyl-[protein] + uridine(34) in tRNA + AH2 + ATP = 2-thiouridine(34) in tRNA + L-cysteinyl-[protein] + A + AMP + diphosphate + H(+). Functionally, catalyzes the 2-thiolation of uridine at the wobble position (U34) of tRNA, leading to the formation of s(2)U34. The sequence is that of tRNA-specific 2-thiouridylase MnmA from Pseudomonas fluorescens (strain Pf0-1).